The following is a 115-amino-acid chain: U3-lycotoxin-Ls1u (115 aa).

The first 20 residues, 1 to 20 (MKFVLLFGVLLVTLFSYSSA), serve as a signal peptide directing secretion. Residues 21-44 (EMLDDFDQADEDELLSLIEKEEAR) constitute a propeptide that is removed on maturation. 3 disulfides stabilise this stretch: C48-C63, C55-C72, and C62-C87.

The protein belongs to the neurotoxin 19 (CSTX) family. 01 subfamily. As to expression, expressed by the venom gland.

The protein localises to the secreted. This Lycosa singoriensis (Wolf spider) protein is U3-lycotoxin-Ls1u.